A 169-amino-acid polypeptide reads, in one-letter code: Small ribosomal subunit protein uS5 (169 aa).

In terms of domain architecture, S5 DRBM spans 14-77; sequence MKEQVVDIRR…QAAKKNLLLV (64 aa).

It belongs to the universal ribosomal protein uS5 family. As to quaternary structure, part of the 30S ribosomal subunit. Contacts proteins S4 and S8.

With S4 and S12 plays an important role in translational accuracy. Functionally, located at the back of the 30S subunit body where it stabilizes the conformation of the head with respect to the body. The polypeptide is Small ribosomal subunit protein uS5 (Alkaliphilus metalliredigens (strain QYMF)).